An 801-amino-acid polypeptide reads, in one-letter code: Elongation factor G, mitochondrial (801 aa).

The transit peptide at 1–65 directs the protein to the mitochondrion; it reads MRVQSLLRAQ…QKIQNQRRWQ (65 aa). One can recognise a tr-type G domain in the interval 100 to 387; it reads SRVRNIGIAA…AVCDYLPNPS (288 aa). GTP is bound by residues 109–116, 185–189, and 239–242; these read AHIDSGKT, DTPGH, and NKMD.

The protein belongs to the TRAFAC class translation factor GTPase superfamily. Classic translation factor GTPase family. EF-G/EF-2 subfamily.

It is found in the mitochondrion. Its pathway is protein biosynthesis; polypeptide chain elongation. Mitochondrial GTPase that catalyzes the GTP-dependent ribosomal translocation step during translation elongation. During this step, the ribosome changes from the pre-translocational (PRE) to the post-translocational (POST) state as the newly formed A-site-bound peptidyl-tRNA and P-site-bound deacylated tRNA move to the P and E sites, respectively. Catalyzes the coordinated movement of the two tRNA molecules, the mRNA and conformational changes in the ribosome. This Pyrenophora tritici-repentis (strain Pt-1C-BFP) (Wheat tan spot fungus) protein is Elongation factor G, mitochondrial (mef1).